A 437-amino-acid chain; its full sequence is Integrase (437 aa).

A Core-binding (CB) domain is found at 73–158 (WTVERWLTHW…TARTAFGEAY (86 aa)). The 250-residue stretch at 179–428 (EEVEPLEVED…DSVRNDVADR (250 aa)) folds into the Tyr recombinase domain. Residues Arg214, Lys245, His379, Arg382, and Trp405 contribute to the active site. Tyr414 serves as the catalytic O-(3'-phospho-DNA)-tyrosine intermediate.

Belongs to the 'phage' integrase family.

Is a recombinase (or integrase), catalyzing the cutting and rejoining of the recombining DNA molecules. The chain is Integrase (int) from Saccharopolyspora erythraea (Streptomyces erythraeus).